A 304-amino-acid chain; its full sequence is Ribonuclease Z (304 aa).

Zn(2+) contacts are provided by histidine 61, histidine 63, aspartate 65, histidine 66, histidine 138, aspartate 206, and histidine 265. Aspartate 65 (proton acceptor) is an active-site residue.

The protein belongs to the RNase Z family. As to quaternary structure, homodimer. It depends on Zn(2+) as a cofactor.

It carries out the reaction Endonucleolytic cleavage of RNA, removing extra 3' nucleotides from tRNA precursor, generating 3' termini of tRNAs. A 3'-hydroxy group is left at the tRNA terminus and a 5'-phosphoryl group is left at the trailer molecule.. Its function is as follows. Zinc phosphodiesterase, which displays some tRNA 3'-processing endonuclease activity. Probably involved in tRNA maturation, by removing a 3'-trailer from precursor tRNA. This chain is Ribonuclease Z, found in Lachnospira eligens (strain ATCC 27750 / DSM 3376 / VPI C15-48 / C15-B4) (Eubacterium eligens).